We begin with the raw amino-acid sequence, 145 residues long: Mannitol-specific phosphotransferase enzyme IIA component (145 aa).

Residues 2 to 145 (ENLTNISIEL…EEITENLAIA (144 aa)) enclose the PTS EIIA type-2 domain. Residue histidine 62 is the Tele-phosphohistidine intermediate of the active site. Histidine 62 is modified (phosphohistidine; by HPr).

The protein resides in the cytoplasm. Its function is as follows. The phosphoenolpyruvate-dependent sugar phosphotransferase system (sugar PTS), a major carbohydrate active transport system, catalyzes the phosphorylation of incoming sugar substrates concomitantly with their translocation across the cell membrane. The enzyme II CmtAB PTS system is involved in D-mannitol transport. This chain is Mannitol-specific phosphotransferase enzyme IIA component, found in Enterococcus faecalis (strain ATCC 700802 / V583).